Here is a 336-residue protein sequence, read N- to C-terminus: Holliday junction branch migration complex subunit RuvB (336 aa).

Residues 1–182 (MAKRMITTEL…FGVVHRLEFY (182 aa)) are large ATPase domain (RuvB-L). ATP-binding positions include leucine 21, arginine 22, glycine 63, lysine 66, threonine 67, threonine 68, 129–131 (EDY), arginine 172, tyrosine 182, and arginine 219. Mg(2+) is bound at residue threonine 67. The small ATPAse domain (RuvB-S) stretch occupies residues 183–253 (TTEELKEIIT…VARFALDILE (71 aa)). Positions 256–336 (KLGLDHIDRQ…GLPYENKELS (81 aa)) are head domain (RuvB-H). DNA is bound by residues arginine 311 and arginine 316.

This sequence belongs to the RuvB family. In terms of assembly, homohexamer. Forms an RuvA(8)-RuvB(12)-Holliday junction (HJ) complex. HJ DNA is sandwiched between 2 RuvA tetramers; dsDNA enters through RuvA and exits via RuvB. An RuvB hexamer assembles on each DNA strand where it exits the tetramer. Each RuvB hexamer is contacted by two RuvA subunits (via domain III) on 2 adjacent RuvB subunits; this complex drives branch migration. In the full resolvosome a probable DNA-RuvA(4)-RuvB(12)-RuvC(2) complex forms which resolves the HJ.

Its subcellular location is the cytoplasm. The enzyme catalyses ATP + H2O = ADP + phosphate + H(+). In terms of biological role, the RuvA-RuvB-RuvC complex processes Holliday junction (HJ) DNA during genetic recombination and DNA repair, while the RuvA-RuvB complex plays an important role in the rescue of blocked DNA replication forks via replication fork reversal (RFR). RuvA specifically binds to HJ cruciform DNA, conferring on it an open structure. The RuvB hexamer acts as an ATP-dependent pump, pulling dsDNA into and through the RuvAB complex. RuvB forms 2 homohexamers on either side of HJ DNA bound by 1 or 2 RuvA tetramers; 4 subunits per hexamer contact DNA at a time. Coordinated motions by a converter formed by DNA-disengaged RuvB subunits stimulates ATP hydrolysis and nucleotide exchange. Immobilization of the converter enables RuvB to convert the ATP-contained energy into a lever motion, pulling 2 nucleotides of DNA out of the RuvA tetramer per ATP hydrolyzed, thus driving DNA branch migration. The RuvB motors rotate together with the DNA substrate, which together with the progressing nucleotide cycle form the mechanistic basis for DNA recombination by continuous HJ branch migration. Branch migration allows RuvC to scan DNA until it finds its consensus sequence, where it cleaves and resolves cruciform DNA. The protein is Holliday junction branch migration complex subunit RuvB of Lachnoclostridium phytofermentans (strain ATCC 700394 / DSM 18823 / ISDg) (Clostridium phytofermentans).